The following is a 274-amino-acid chain: Diaminopimelate epimerase (274 aa).

N11, Q44, and N64 together coordinate substrate. The Proton donor role is filled by C73. Substrate contacts are provided by residues 74-75, N157, N190, and 208-209; these read GN and ER. C217 acts as the Proton acceptor in catalysis. 218–219 serves as a coordination point for substrate; the sequence is GS.

It belongs to the diaminopimelate epimerase family. In terms of assembly, homodimer.

The protein localises to the cytoplasm. The enzyme catalyses (2S,6S)-2,6-diaminopimelate = meso-2,6-diaminopimelate. Its pathway is amino-acid biosynthesis; L-lysine biosynthesis via DAP pathway; DL-2,6-diaminopimelate from LL-2,6-diaminopimelate: step 1/1. Functionally, catalyzes the stereoinversion of LL-2,6-diaminopimelate (L,L-DAP) to meso-diaminopimelate (meso-DAP), a precursor of L-lysine and an essential component of the bacterial peptidoglycan. This Histophilus somni (strain 2336) (Haemophilus somnus) protein is Diaminopimelate epimerase.